We begin with the raw amino-acid sequence, 182 residues long: Spermatophorin SP23 (182 aa).

An N-terminal signal peptide occupies residues 1–7 (MVASIAG). 3 disordered regions span residues 1–26 (MVAS…FQPY), 56–79 (FQTI…NSIE), and 104–136 (IVVN…PPTI). The span at 109-128 (APPPPPVIYQAPPPPPPPPI) shows a compositional bias: pro residues.

Spermatophore.

The protein resides in the secreted. Structural protein of a layer within the wall of the spermatophore produced probably by cell type 4 of the bean-shaped gland (BAG). Fixation in the spermatophore seems to require covalent cross-linking of spermatophorins. The protein is Spermatophorin SP23 (SP23) of Tenebrio molitor (Yellow mealworm beetle).